Reading from the N-terminus, the 156-residue chain is Movement protein P17 (156 aa).

The segment at 38-54 is homodimerization; the sequence is AEDAEEEAIAAQEELEF. Disordered regions lie at residues 55-80 and 131-156; these read PEDE…EVSP and AKYH…IKRG. Residues 57–156 are RNA-binding; sequence DEAQARHSCL…RAAPKLIKRG (100 aa). A phosphoserine mark is found at S71, S79, S137, and S140. The segment covering 144–156 has biased composition (basic residues); sequence KLRRAAPKLIKRG.

It belongs to the polerovirus movement protein family. In terms of assembly, homodimer. Heterodimer with movement protein P3a. Expressed as a nonphosphorylated 20kDa form and a phosphorylated 22kDa form. Phosphorylated by a host PKC-related kinase. Serine phosphorylation is required for plamodesma targeting.

It is found in the host cell junction. It localises to the host plasmodesma. Its subcellular location is the host mitochondrion outer membrane. The protein localises to the host Golgi apparatus. The protein resides in the host chloroplast envelope. In terms of biological role, together with movement protein P3a, facilitates long-distance movement of virions in host. Transports viral genome to neighboring plant cells directly through plasmosdesmata, without any budding. The movement protein allows efficient cell to cell propagation, by bypassing the host cell wall barrier. Binds ssRNA. This is Movement protein P17 from Solanum tuberosum (Potato).